A 229-amino-acid polypeptide reads, in one-letter code: ATP-dependent dethiobiotin synthetase BioD (229 aa).

12–17 contacts ATP; sequence GAGKTI. T16 serves as a coordination point for Mg(2+). The active site involves K38. Residues D46, 105-108, and 165-166 each bind ATP; these read EGVG and SE. Mg(2+) contacts are provided by D46 and E105.

Belongs to the dethiobiotin synthetase family. In terms of assembly, homodimer. Mg(2+) serves as cofactor.

The protein resides in the cytoplasm. It catalyses the reaction (7R,8S)-7,8-diammoniononanoate + CO2 + ATP = (4R,5S)-dethiobiotin + ADP + phosphate + 3 H(+). The catalysed reaction is (7R,8S)-8-amino-7-(carboxyamino)nonanoate + ATP = (4R,5S)-dethiobiotin + ADP + phosphate + H(+). The protein operates within cofactor biosynthesis; biotin biosynthesis; biotin from 7,8-diaminononanoate: step 1/2. Functionally, catalyzes a mechanistically unusual reaction, the ATP-dependent insertion of CO2 between the N7 and N8 nitrogen atoms of 7,8-diaminopelargonic acid (DAPA, also called 7,8-diammoniononanoate) to form a ureido ring. This cyanobacterium does not encode bioA (which catalyzes the formation of the precursor for this reaction in the cannonical pathway), instead it encodes bioU, which replaces bioA and also performs the first half of the cannonical BioD reaction. Thus in this organism BioD has a different substrate. The sequence is that of ATP-dependent dethiobiotin synthetase BioD from Gloeobacter violaceus (strain ATCC 29082 / PCC 7421).